Consider the following 314-residue polypeptide: Methionyl-tRNA formyltransferase (314 aa).

112-115 (SLLP) is a binding site for (6S)-5,6,7,8-tetrahydrofolate.

It belongs to the Fmt family.

It catalyses the reaction L-methionyl-tRNA(fMet) + (6R)-10-formyltetrahydrofolate = N-formyl-L-methionyl-tRNA(fMet) + (6S)-5,6,7,8-tetrahydrofolate + H(+). Attaches a formyl group to the free amino group of methionyl-tRNA(fMet). The formyl group appears to play a dual role in the initiator identity of N-formylmethionyl-tRNA by promoting its recognition by IF2 and preventing the misappropriation of this tRNA by the elongation apparatus. This Legionella pneumophila subsp. pneumophila (strain Philadelphia 1 / ATCC 33152 / DSM 7513) protein is Methionyl-tRNA formyltransferase.